The following is a 186-amino-acid chain: Large ribosomal subunit protein uL22 (186 aa).

The segment at 160 to 186 is disordered; the sequence is AAENEPAKKKLSKKKLQRQKEKMMRNE. The segment covering 177-186 has biased composition (basic and acidic residues); sequence RQKEKMMRNE.

This sequence belongs to the universal ribosomal protein uL22 family.

In Aedes aegypti (Yellowfever mosquito), this protein is Large ribosomal subunit protein uL22 (RpL17).